Reading from the N-terminus, the 613-residue chain is pH-response transcription factor pacC/RIM101 (613 aa).

The segment at 1 to 61 (MSPSAPEQKP…SSTAPSTSSD (61 aa)) is disordered. Positions 11–60 (QLQQQQQQQQQGSSSGDSSSGSVNDSKSVTPAPSATSSTSQSSTAPSTSS) are enriched in low complexity. 3 consecutive C2H2-type zinc fingers follow at residues 64-89 (LICR…CERH), 100-124 (LTCQ…IRVH), and 130-152 (HKCE…VKTH). Over residues 146-157 (KKHVKTHADDSV) the composition is skewed to basic and acidic residues. Disordered regions lie at residues 146-186 (KKHV…YDHT), 371-391 (NTPS…GADG), 406-535 (AISS…ATRE), and 565-613 (EFVE…MPGA). Residues 417–441 (PPSSSMSYTSGHSPSPSSSAMSPQS) are compositionally biased toward low complexity. Composition is skewed to polar residues over residues 442 to 460 (RHGS…SLPA) and 506 to 517 (SGASTPKASESA). The short motif at 451–454 (YPTL) is the YPX[LI] motif 1 element. The YPX[LI] motif 2 signature appears at 605–608 (YPIL).

Belongs to the pacC/RIM101 family. Binds to DNA. Post-translationally, activated by C-terminal proteolytic cleavage by signaling protease (probably palB/RIM13) at neutral to alkaline ambient pH.

It localises to the cytoplasm. The protein localises to the nucleus. Its function is as follows. Transcription factor that mediates regulation of both acid- and alkaline-expressed genes in response to ambient pH. At alkaline ambient pH, activates transcription of alkaline-expressed genes (including PAC1 itself) and represses transcription of acid-expressed genes. The chain is pH-response transcription factor pacC/RIM101 (PAC1) from Gibberella moniliformis (Maize ear and stalk rot fungus).